Here is a 168-residue protein sequence, read N- to C-terminus: 6,7-dimethyl-8-ribityllumazine synthase (168 aa).

Residues W31, 65 to 67 (SFE), and 90 to 92 (NVI) each bind 5-amino-6-(D-ribitylamino)uracil. A (2S)-2-hydroxy-3-oxobutyl phosphate-binding site is contributed by 95–96 (ET). Catalysis depends on H98, which acts as the Proton donor. F123 is a 5-amino-6-(D-ribitylamino)uracil binding site. Position 137 (R137) interacts with (2S)-2-hydroxy-3-oxobutyl phosphate.

It belongs to the DMRL synthase family.

The enzyme catalyses (2S)-2-hydroxy-3-oxobutyl phosphate + 5-amino-6-(D-ribitylamino)uracil = 6,7-dimethyl-8-(1-D-ribityl)lumazine + phosphate + 2 H2O + H(+). Its pathway is cofactor biosynthesis; riboflavin biosynthesis; riboflavin from 2-hydroxy-3-oxobutyl phosphate and 5-amino-6-(D-ribitylamino)uracil: step 1/2. In terms of biological role, catalyzes the formation of 6,7-dimethyl-8-ribityllumazine by condensation of 5-amino-6-(D-ribitylamino)uracil with 3,4-dihydroxy-2-butanone 4-phosphate. This is the penultimate step in the biosynthesis of riboflavin. In Christiangramia forsetii (strain DSM 17595 / CGMCC 1.15422 / KT0803) (Gramella forsetii), this protein is 6,7-dimethyl-8-ribityllumazine synthase.